The primary structure comprises 146 residues: PTS system fructose-specific EIIA component (146 aa).

Residues 1-124 form the PTS EIIA type-4 domain; the sequence is MISVIISGHG…NLKAMSQQSF (124 aa). The Tele-phosphohistidine intermediate role is filled by His-9. A Phosphohistidine; by HPr modification is found at His-9.

The protein resides in the cytoplasm. Functionally, the phosphoenolpyruvate-dependent sugar phosphotransferase system (sugar PTS), a major carbohydrate active transport system, catalyzes the phosphorylation of incoming sugar substrates concomitantly with their translocation across the cell membrane. The enzyme II LevDE PTS system is involved in fructose transport. Its function is as follows. LevD and LevE act as negative regulators of the levanase operon. They may be involved in a PTS-mediated phosphorylation of a regulator. The polypeptide is PTS system fructose-specific EIIA component (Bacillus subtilis (strain 168)).